The following is a 628-amino-acid chain: DNA-directed RNA polymerase subunit gamma (628 aa).

4 residues coordinate Zn(2+): Cys71, Cys73, Cys86, and Cys89. Residues Asp467, Asp469, and Asp471 each contribute to the Mg(2+) site.

The protein belongs to the RNA polymerase beta' chain family. RpoC1 subfamily. In cyanobacteria the RNAP catalytic core is composed of 2 alpha, 1 beta, 1 beta', 1 gamma and 1 omega subunit. When a sigma factor is associated with the core the holoenzyme is formed, which can initiate transcription. Mg(2+) is required as a cofactor. It depends on Zn(2+) as a cofactor.

It catalyses the reaction RNA(n) + a ribonucleoside 5'-triphosphate = RNA(n+1) + diphosphate. Functionally, DNA-dependent RNA polymerase catalyzes the transcription of DNA into RNA using the four ribonucleoside triphosphates as substrates. The polypeptide is DNA-directed RNA polymerase subunit gamma (Crocosphaera subtropica (strain ATCC 51142 / BH68) (Cyanothece sp. (strain ATCC 51142))).